Here is a 476-residue protein sequence, read N- to C-terminus: Angiotensinogen (476 aa).

The signal sequence occupies residues 1 to 24 (MAPAGVSLRATILCLVAWAGLAAG). Asparagine 38, asparagine 161, asparagine 295, and asparagine 319 each carry an N-linked (GlcNAc...) asparagine glycan. Residues cysteine 42 and cysteine 162 are joined by a disulfide bond.

Belongs to the serpin family. Post-translationally, in response to low blood pressure, the enzyme renin/REN cleaves angiotensinogen to produce angiotensin-1. Angiotensin-1 is a substrate of ACE (angiotensin converting enzyme) that removes a dipeptide to yield the physiologically active peptide angiotensin-2. Angiotensin-1 and angiotensin-2 can be further processed to generate angiotensin-3, angiotensin-4. Angiotensin 1-9 is cleaved from angiotensin-1 by ACE2 and can be further processed by ACE to produce angiotensin 1-7, angiotensin 1-5 and angiotensin 1-4. Angiotensin 1-7 has also been proposed to be cleaved from angiotensin-2 by ACE2 or from angiotensin-1 by MME (neprilysin). The disulfide bond is labile. Angiotensinogen is present in the circulation in a near 40:60 ratio with the oxidized disulfide-bonded form, which preferentially interacts with receptor-bound renin.

Its subcellular location is the secreted. Its function is as follows. Essential component of the renin-angiotensin system (RAS), a potent regulator of blood pressure, body fluid and electrolyte homeostasis. Acts directly on vascular smooth muscle as a potent vasoconstrictor, affects cardiac contractility and heart rate through its action on the sympathetic nervous system, and alters renal sodium and water absorption through its ability to stimulate the zona glomerulosa cells of the adrenal cortex to synthesize and secrete aldosterone. Acts by binding to angiotensin receptors AGTR1 and AGTR2. Also binds the DEAR/FBXW7-AS1 receptor. In terms of biological role, stimulates aldosterone release. Functionally, is a ligand for the G-protein coupled receptor MAS1. Has vasodilator and antidiuretic effects. Has an antithrombotic effect that involves MAS1-mediated release of nitric oxide from platelets. This is Angiotensinogen (AGT) from Pan troglodytes (Chimpanzee).